We begin with the raw amino-acid sequence, 210 residues long: Ras-related protein Rab-43 (210 aa).

23–30 lines the GTP pocket; that stretch reads GDASVGKT. Residues 45 to 53 carry the Effector region motif; sequence QGSTIGVDF. S47 is modified (phosphoserine). A GTP-binding site is contributed by 71–75; it reads DTAGQ. The residue at position 80 (T80) is a Phosphothreonine. GTP-binding positions include 129–132 and 161–162; these read NKSD and AK. S-geranylgeranyl cysteine attachment occurs at residues C208 and C210. Residue C210 is modified to Cysteine methyl ester.

This sequence belongs to the small GTPase superfamily. Rab family. Interacts with GDI1, GDI2 and CHM; phosphorylation at Thr-80 disrupts these interactions.

It localises to the cytoplasmic vesicle. Its subcellular location is the phagosome. The protein localises to the phagosome membrane. It is found in the golgi apparatus. The protein resides in the trans-Golgi network membrane. It localises to the trans-Golgi network. The small GTPases Rab are key regulators of intracellular membrane trafficking, from the formation of transport vesicles to their fusion with membranes. Rabs cycle between an inactive GDP-bound form and an active GTP-bound form that is able to recruit to membranes different set of downstream effectors directly responsible for vesicle formation, movement, tethering and fusion. The low intrinsic GTPase activity of RAB43 is activated by USP6NL. Involved in retrograde transport from the endocytic pathway to the Golgi apparatus. Involved in the transport of Shiga toxin from early and recycling endosomes to the trans-Golgi network. Required for the structural integrity of the Golgi complex. Plays a role in the maturation of phagosomes that engulf pathogens, such as S.aureus and Mycobacterium. This is Ras-related protein Rab-43 (Rab43) from Rattus norvegicus (Rat).